Reading from the N-terminus, the 736-residue chain is Acyl-coenzyme A oxidase (736 aa).

The protein belongs to the acyl-CoA oxidase family. FAD is required as a cofactor.

The protein localises to the peroxisome. It carries out the reaction a 2,3-saturated acyl-CoA + O2 = a (2E)-enoyl-CoA + H2O2. It functions in the pathway lipid metabolism; peroxisomal fatty acid beta-oxidation. This is Acyl-coenzyme A oxidase (POX1) from Kluyveromyces lactis (strain ATCC 8585 / CBS 2359 / DSM 70799 / NBRC 1267 / NRRL Y-1140 / WM37) (Yeast).